The primary structure comprises 151 residues: MD-2-related lipid-recognition protein (151 aa).

The first 18 residues, 1–18 (MAALHWLLLAALLGCTLA), serve as a signal peptide directing secretion. 3 disulfides stabilise this stretch: cysteine 27–cysteine 141, cysteine 45–cysteine 51, and cysteine 95–cysteine 100. An N-linked (GlcNAc...) asparagine glycan is attached at asparagine 58.

Post-translationally, N-glycosylated. As to expression, hemolymph (at protein level). Constitutively expressed mainly in fat body and also in hemocytes and secreted into hemolymph. Not detected in midgut, epidermis, or Malpighian tubule of naive larvae.

The protein resides in the secreted. Its function is as follows. Binds to lipopolysaccharide from a variety of Gram-negative bacteria and to lipid A. The sequence is that of MD-2-related lipid-recognition protein from Manduca sexta (Tobacco hawkmoth).